A 136-amino-acid chain; its full sequence is Small ribosomal subunit protein eS12 (136 aa).

It belongs to the eukaryotic ribosomal protein eS12 family.

In Dictyostelium discoideum (Social amoeba), this protein is Small ribosomal subunit protein eS12 (rps12).